Here is a 266-residue protein sequence, read N- to C-terminus: 5'-nucleotidase SurE (266 aa).

D8, D9, S39, and N93 together coordinate a divalent metal cation.

Belongs to the SurE nucleotidase family. A divalent metal cation is required as a cofactor.

The protein resides in the cytoplasm. It catalyses the reaction a ribonucleoside 5'-phosphate + H2O = a ribonucleoside + phosphate. In terms of biological role, nucleotidase that shows phosphatase activity on nucleoside 5'-monophosphates. This Pyrobaculum arsenaticum (strain DSM 13514 / JCM 11321 / PZ6) protein is 5'-nucleotidase SurE.